Consider the following 413-residue polypeptide: Divalent metal cation transporter MntH (413 aa).

A run of 11 helical transmembrane segments spans residues 19 to 39, 46 to 66, 94 to 114, 122 to 142, 156 to 176, 196 to 216, 241 to 261, 290 to 310, 329 to 349, 350 to 370, and 389 to 409; these read LALM…GNFA, ASFG…AMLI, VWFY…AEFI, LVLG…TFLI, VIGG…IFSQ, AVFL…IYLH, IAMT…AAAF, IFGL…TLAG, AITM…TRIL, VMSQ…LLIF, and IGWA…VGSL.

This sequence belongs to the NRAMP family.

The protein resides in the cell inner membrane. In terms of biological role, h(+)-stimulated, divalent metal cation uptake system. The polypeptide is Divalent metal cation transporter MntH (Klebsiella pneumoniae subsp. pneumoniae (strain ATCC 700721 / MGH 78578)).